The primary structure comprises 140 residues: UPF0132 membrane protein MJ1527 (140 aa).

3 consecutive transmembrane segments (helical) span residues 40–60 (MEGV…LLLE), 70–90 (AMQS…VSAI), and 92–112 (IIGW…WIVG).

It belongs to the UPF0132 family.

Its subcellular location is the cell membrane. In Methanocaldococcus jannaschii (strain ATCC 43067 / DSM 2661 / JAL-1 / JCM 10045 / NBRC 100440) (Methanococcus jannaschii), this protein is UPF0132 membrane protein MJ1527.